The primary structure comprises 71 residues: Disintegrin tzabcanin (71 aa).

The region spanning 1-71 (GEECDCGSPA…ADCPRNHFHA (71 aa)) is the Disintegrin domain. 6 disulfides stabilise this stretch: Cys4-Cys19, Cys6-Cys14, Cys13-Cys36, Cys27-Cys33, Cys32-Cys57, and Cys45-Cys64. The Cell attachment site motif lies at 49 to 51 (RGD).

Belongs to the venom metalloproteinase (M12B) family. P-II subfamily. P-IIa sub-subfamily. In terms of tissue distribution, expressed by the venom gland.

The protein resides in the secreted. Inhibits fibrinogen interaction with platelets. Acts by binding to alpha-IIb/beta-3 (ITGA2B/ITGB3) on the platelet surface and inhibits aggregation induced by ADP, thrombin, platelet-activating factor and collagen. Inhibits cell adhesion to vitronectin, probably by blocking its receptor integrin alpha-V/beta-3 (ITGAV/ITGB3), and to fibronectin in vitro. Shows little to no cytotoxicity in vitro. This chain is Disintegrin tzabcanin, found in Crotalus tzabcan (Yucatan neotropical rattlesnake).